The sequence spans 195 residues: Putative manganese efflux pump MntP (195 aa).

The next 6 helical transmembrane spans lie at 4 to 24, 39 to 59, 64 to 84, 120 to 140, 145 to 165, and 175 to 195; these read ILIT…SLAM, FVLT…NLGL, FLGV…GWQM, ILLL…TLGT, ILIT…VGFA, and GSYA…KFVV.

This sequence belongs to the MntP (TC 9.B.29) family.

It is found in the cell membrane. In terms of biological role, probably functions as a manganese efflux pump. The protein is Putative manganese efflux pump MntP of Syntrophomonas wolfei subsp. wolfei (strain DSM 2245B / Goettingen).